Here is a 294-residue protein sequence, read N- to C-terminus: Deubiquitinase OTUD6B (294 aa).

The segment at Val-85 to Asp-120 is disordered. The span at Lys-111 to Asp-120 shows a compositional bias: basic and acidic residues. Residues Leu-150–Leu-287 form the OTU domain. The tract at residues Ile-155 to Cys-161 is cys-loop. Asp-158 is an active-site residue. Cys-161 acts as the Nucleophile in catalysis. The tract at residues Ile-222–Leu-232 is variable-loop. The interval Tyr-270–His-280 is his-loop. His-280 is a catalytic residue.

It carries out the reaction Thiol-dependent hydrolysis of ester, thioester, amide, peptide and isopeptide bonds formed by the C-terminal Gly of ubiquitin (a 76-residue protein attached to proteins as an intracellular targeting signal).. Functionally, deubiquitinating enzyme that may play a role in the ubiquitin-dependent regulation of different cellular processes. The chain is Deubiquitinase OTUD6B (otud6b) from Xenopus laevis (African clawed frog).